The chain runs to 600 residues: PWWP domain-containing protein 2B (600 aa).

Disordered regions lie at residues 81 to 115, 143 to 171, 186 to 350, 366 to 408, and 426 to 477; these read ETGP…PVPA, WVPQ…LILS, KSTV…LGDG, GCPR…PQGK, and DCTS…TVPP. The span at 104 to 115 shows a compositional bias: pro residues; sequence EPPPPLIPPVPA. Residues 151 to 160 show a composition bias toward basic residues; sequence TIKRTRRRLS. Polar residues predominate over residues 187 to 200; the sequence is STVSPQEASPSPLN. Phosphoserine occurs at positions 190 and 210. Positions 239-252 are enriched in basic and acidic residues; that stretch reads EKREEDRVAGERVP. Phosphoserine is present on S254. The segment covering 286-297 has biased composition (polar residues); it reads PQQSLQNGSQDS. Over residues 298-309 the composition is skewed to basic and acidic residues; that stretch reads EVSRDVEPRGGG. Residues 328-339 are compositionally biased toward pro residues; the sequence is PVPPISDLPPPK. The segment covering 381–395 has biased composition (low complexity); it reads DGSSHGLEDLSSGSS. Positions 443–456 are enriched in polar residues; it reads SSGSEVTSPDTGDL. A Phosphoserine modification is found at S457. Positions 457-468 are enriched in low complexity; it reads SSGDSASVPSSS. In terms of domain architecture, PWWP spans 500 to 560; sequence VGDIVWGKIH…ISKLSPFSEF (61 aa).

In terms of assembly, component of a MTA1-specific subcomplex of the NuRD complex composed of PWWP2B, MTA1 and HDAC1 but does not contain CHD4 and MBD3. Interacts with MTA1, MTA2, MTA3, HDAC1, HDAC2, RBBP4, RBBP7, BRCC3 and ZNF516. Does not interact with CHD4 and MBD3. Deubiquitinated by BRCC3; leading to its stabilization. In terms of tissue distribution, expressed in the brown adipose tissue.

Its subcellular location is the nucleus. Functionally, chromatin-binding protein that acts as an adapter between distinct nucleosome components (H3K36me3 or H2A.Z) and chromatin-modifying complexes, contributing to the regulation of the levels of histone acetylation at actively transcribed genes. Competes with CHD4 and MBD3 for interaction with MTA1 to form a NuRD subcomplex, preventing the formation of full NuRD complex (containing CHD4 and MBD3), leading to recruitment of HDACs to gene promoters resulting in turn in the deacetylation of nearby H3K27 and H2A.Z. Plays a role in facilitating transcriptional elongation through regulation of histone acetylation. Negatively regulates brown adipocyte thermogenesis by interacting with and stabilizing HDAC1 at the UCP1 gene promoter, thereby promoting histone deacetylation at the promoter leading to the repression of UCP1 expression. The chain is PWWP domain-containing protein 2B (Pwwp2b) from Mus musculus (Mouse).